Here is a 405-residue protein sequence, read N- to C-terminus: Protein held out wings (405 aa).

A KH domain is found at 142 to 210; it reads YVPVREHPDF…HLSDDLHVLI (69 aa).

Homodimer. Interacts with Sxl; promoting nuclear retention of msl-2 transcripts. In terms of tissue distribution, during embryogenesis, expression is seen in mesodermal precursors of somatic, visceral and pharyngeal muscle. Later in embryogenesis, expression is restricted to heart and muscle attachment sites of the epidermis. During onset of metamorphosis, expression is seen in muscle and muscle attachment cells.

It is found in the nucleus. Its function is as follows. RNA-binding protein involved in muscle development and dosage compensation. Vital role in steroid regulation of muscle development and to control heart rate. Required during embryogenesis, in late stages of somatic muscle development, for myotube migration and during metamorphosis for muscle reorganization. Required for integrin-mediated cell-adhesion in wing blade. Together with Sxl, acts as an inhibitor of dosage compensation in females by preventing production of msl-2 protein, an essential component of the MSL complex. Specifically binds to the 5'-UTR of msl-2 transcripts and cooperates with Sxl to promote nuclear retention of msl-2 mRNAs. The sequence is that of Protein held out wings (how) from Drosophila melanogaster (Fruit fly).